The chain runs to 91 residues: Small ribosomal subunit protein uS19 (91 aa).

This sequence belongs to the universal ribosomal protein uS19 family.

In terms of biological role, protein S19 forms a complex with S13 that binds strongly to the 16S ribosomal RNA. This Azoarcus sp. (strain BH72) protein is Small ribosomal subunit protein uS19.